The following is an 875-amino-acid chain: Alanine--tRNA ligase (875 aa).

Zn(2+) is bound by residues histidine 564, histidine 568, cysteine 666, and histidine 670.

Belongs to the class-II aminoacyl-tRNA synthetase family. Homotetramer. Zn(2+) is required as a cofactor.

The protein resides in the cytoplasm. It carries out the reaction tRNA(Ala) + L-alanine + ATP = L-alanyl-tRNA(Ala) + AMP + diphosphate. In terms of biological role, catalyzes the attachment of alanine to tRNA(Ala) in a two-step reaction: alanine is first activated by ATP to form Ala-AMP and then transferred to the acceptor end of tRNA(Ala). Also edits incorrectly charged Ser-tRNA(Ala) and Gly-tRNA(Ala) via its editing domain. This Yersinia pseudotuberculosis serotype IB (strain PB1/+) protein is Alanine--tRNA ligase.